Reading from the N-terminus, the 354-residue chain is Probable alcohol acetyltransferase (354 aa).

Active-site charge relay system residues include serine 124 and histidine 293.

It belongs to the AB hydrolase superfamily.

Its function is as follows. Probable alcohol acetyltransferase that uses acetyl-CoA to synthesize acetate esters from various alcohols. Not involved in the synthesis of ethyl acetate. The polypeptide is Probable alcohol acetyltransferase (EAT2) (Cyberlindnera jadinii (strain ATCC 18201 / CBS 1600 / BCRC 20928 / JCM 3617 / NBRC 0987 / NRRL Y-1542) (Torula yeast)).